Consider the following 689-residue polypeptide: Glycine--tRNA ligase beta subunit (689 aa).

Belongs to the class-II aminoacyl-tRNA synthetase family. Tetramer of two alpha and two beta subunits.

It is found in the cytoplasm. The catalysed reaction is tRNA(Gly) + glycine + ATP = glycyl-tRNA(Gly) + AMP + diphosphate. The chain is Glycine--tRNA ligase beta subunit from Acinetobacter baumannii (strain ACICU).